Reading from the N-terminus, the 1863-residue chain is C-myc promoter-binding protein (1863 aa).

Positions 42-200 (KEPITDVSVI…AVYLCYKKSV (159 aa)) constitute an MABP domain. Residues 192 to 364 (VYLCYKKSVA…KVPFPSPQRP (173 aa)) form the uDENN domain. In terms of domain architecture, cDENN spans 385-521 (PLPLSGGKFS…PCKNLMNTLN (137 aa)). The dDENN domain maps to 523 to 641 (LHQQLAKLQQ…CSFVSDKDAS (119 aa)). At serine 731 the chain carries Phosphoserine. 2 PPR repeats span residues 772–808 (WFIC…MDPP) and 809–843 (DEVC…GIDP). The segment at 905 to 952 (DLGYNSLSKDEVRRGDTSTEDIQEEKDKKGSDCSSLSESESTKGSADC) is disordered. Over residues 912–921 (SKDEVRRGDT) the composition is skewed to basic and acidic residues. The Bipartite nuclear localization signal motif lies at 917 to 933 (RRGDTSTEDIQEEKDKK). Over residues 936 to 949 (DCSSLSESESTKGS) the composition is skewed to low complexity. Serine 1015, serine 1035, serine 1099, serine 1151, and serine 1152 each carry phosphoserine. Residues 1075–1111 (TRPNTLDIGKPPLRSKRDSLEKESSDDDTPFDGSNYL) are disordered. The tract at residues 1177–1202 (TEQQQKEEEEEDEDDSKSISTPSARR) is disordered. A phosphoserine mark is found at serine 1225, serine 1240, and serine 1251. Disordered stretches follow at residues 1237–1306 (NKKS…SPSF) and 1348–1375 (SKDQ…TDED). Residues 1269–1279 (TKSEEKPRDRL) are compositionally biased toward basic and acidic residues. Residue serine 1281 is modified to Phosphoserine. 2 stretches are compositionally biased toward polar residues: residues 1297 to 1306 (DTLTHSSPSF) and 1348 to 1371 (SKDQ…STSL). 4 positions are modified to phosphoserine: serine 1508, serine 1587, serine 1589, and serine 1591.

Expressed ubiquitously. Highest expression in bone marrow, medium in peripheral blood lymphocytes and lowest in spleen. In brain, breast, and prostate, higher expression was seen in normal cells than in tumor cells. Expression is regulated in a growth- and cell cycle-dependent manner.

The protein resides in the nucleus. Functionally, probable guanine nucleotide exchange factor (GEF) which may activate RAB10. Promotes the exchange of GDP to GTP, converting inactive GDP-bound Rab proteins into their active GTP-bound form. According to PubMed:8056341, it may bind to ISRE-like element (interferon-stimulated response element) of MYC P2 promoter. This Homo sapiens (Human) protein is C-myc promoter-binding protein (DENND4A).